The primary structure comprises 97 residues: UPF0235 protein DET1292 (97 aa).

Belongs to the UPF0235 family.

The chain is UPF0235 protein DET1292 from Dehalococcoides mccartyi (strain ATCC BAA-2266 / KCTC 15142 / 195) (Dehalococcoides ethenogenes (strain 195)).